A 127-amino-acid polypeptide reads, in one-letter code: Large ribosomal subunit protein bL20 (127 aa).

The protein belongs to the bacterial ribosomal protein bL20 family.

Binds directly to 23S ribosomal RNA and is necessary for the in vitro assembly process of the 50S ribosomal subunit. It is not involved in the protein synthesizing functions of that subunit. The polypeptide is Large ribosomal subunit protein bL20 (rplT) (Streptomyces coelicolor (strain ATCC BAA-471 / A3(2) / M145)).